A 197-amino-acid chain; its full sequence is GTP cyclohydrolase 1 (197 aa).

The Zn(2+) site is built by cysteine 85, histidine 88, and cysteine 156.

The protein belongs to the GTP cyclohydrolase I family. In terms of assembly, toroid-shaped homodecamer, composed of two pentamers of five dimers.

The enzyme catalyses GTP + H2O = 7,8-dihydroneopterin 3'-triphosphate + formate + H(+). It functions in the pathway cofactor biosynthesis; 7,8-dihydroneopterin triphosphate biosynthesis; 7,8-dihydroneopterin triphosphate from GTP: step 1/1. The chain is GTP cyclohydrolase 1 from Mesorhizobium japonicum (strain LMG 29417 / CECT 9101 / MAFF 303099) (Mesorhizobium loti (strain MAFF 303099)).